A 614-amino-acid polypeptide reads, in one-letter code: Zinc finger and SCAN domain-containing protein 2 (614 aa).

3 disordered regions span residues 1 to 25 (MAAE…EDEQ), 42 to 73 (AVLQ…EGPQ), and 162 to 200 (NISG…RVVP). In terms of domain architecture, SCAN box spans 69 to 127 (AEGPQGALVRFRELCRRWLRPEVHTKEQMLTVLPREIQAWLQEHRPESSEEAVALVEDL). 14 C2H2-type zinc fingers span residues 222–244 (YECP…ERTH), 250–272 (YKCD…QTTH), 278–300 (YKCR…QRIH), 306–328 (FQCA…QRTH), 334–356 (YSCP…QGIH), 362–384 (YACK…QRIH), 390–412 (YKCT…RRTH), 418–440 (YQCG…RRTH), 446–468 (YKCG…QGTH), 474–496 (YECL…QRTH), 502–524 (YRCG…QRTH), 530–552 (YKCL…QRAH), 558–580 (YRCP…QRIH), and 586–608 (YRCP…QRTH).

Belongs to the krueppel C2H2-type zinc-finger protein family. In terms of tissue distribution, in the adult, predominantly found in spermatids. Also present in the embryo.

It localises to the nucleus. May be involved in transcriptional regulation during the post-meiotic stages of spermatogenesis. The protein is Zinc finger and SCAN domain-containing protein 2 (Zscan2) of Mus musculus (Mouse).